The following is a 115-amino-acid chain: U3-lycotoxin-Ls1k (115 aa).

The signal sequence occupies residues 1–20 (MKFVLLFGVLLVTLFSYSSA). A propeptide spanning residues 21-44 (EMLDDFDQADEDELLSLIEKEEAR) is cleaved from the precursor. 4 cysteine pairs are disulfide-bonded: C48–C63, C55–C72, C62–C87, and C74–C85.

It belongs to the neurotoxin 19 (CSTX) family. 01 subfamily. In terms of tissue distribution, expressed by the venom gland.

Its subcellular location is the secreted. This is U3-lycotoxin-Ls1k from Lycosa singoriensis (Wolf spider).